Here is a 389-residue protein sequence, read N- to C-terminus: MEDSPTMVRVDSPTMVRGENQVSPCQGRRCFPKALGYVTGDMKELANQLKDKPVVLQFIDWILRGISQVVFVNNPVSGILILVGLLVQNPWWALTGWLGTVVSTLMALLLSQDRSLIASGLYGYNATLVGVLMAVFSDKGDYFWWLLLPVCAMSMTCPIFSSALNSMLSKWDLPVFTLPFNMALSMYLSATGHYNPFFPAKLVIPITTAPNISWSDLSALELLKSIPVGVGQIYGCDNPWTGGIFLGAILLSSPLMCLHAAIGSLLGIAAGLSLSAPFEDIYFGLWGFNSSLACIAMGGMFMALTWQTHLLALGCALFTAYLGVGMANFMAEVGLPACTWPFCLATLLFLIMTTKNSNIYKMPLSKVTYPEENRIFYLQAKKRMVESPL.

A run of 5 helical transmembrane segments spans residues 53-73 (PVVL…VFVN), 91-110 (WWAL…ALLL), 116-136 (LIAS…MAVF), 143-163 (FWWL…FSSA), and 173-193 (LPVF…ATGH). A glycan (N-linked (GlcNAc...) asparagine) is linked at Asn-211. The next 4 helical transmembrane spans lie at 242–262 (GGIF…HAAI), 281–301 (IYFG…GGMF), 310–330 (LLAL…ANFM), and 333–353 (VGLP…LIMT).

It belongs to the urea transporter family. Homotrimer; each subunit contains a pore through which urea permeates. Identified in a complex with STOM. Detected in erythrocytes (at protein level). Expressed in spleen erythroblasts and tumoral kidney.

It is found in the cell membrane. The protein localises to the basolateral cell membrane. It carries out the reaction urea(in) = urea(out). Inhibited by phloretin and para-chloromercuribenzene sulfonate. In terms of biological role, mediates the transport of urea driven by a concentration gradient across the cell membrane of erythrocytes. Also mediates the transport of urea across the cell membrane of the renal inner medullary collecting duct which is critical to the urinary concentrating mechanism. Facilitates water transport in erythrocytes. This is Urea transporter 1 (SLC14A1) from Homo sapiens (Human).